The primary structure comprises 315 residues: Ribosome biogenesis protein BRX1 homolog 1 (315 aa).

Positions 1–35 (MGRKRKHSETVTAAPVKDSAPERPQRTLLGWKDKK) are disordered. Over residues 19-35 (SAPERPQRTLLGWKDKK) the composition is skewed to basic and acidic residues. A Brix domain is found at 53–256 (EKVLVTCSRR…PIKIFGGSFG (204 aa)).

The protein belongs to the BRX1 family. In terms of tissue distribution, expressed in roots, rosette leaves, stems, flowers, siliques and seeds.

The protein resides in the nucleus. Its subcellular location is the nucleolus. Its function is as follows. Involved in pre-rRNA processing and required for biogenesis of the large (60S) ribosomal subunit. Required for proper development. This Arabidopsis thaliana (Mouse-ear cress) protein is Ribosome biogenesis protein BRX1 homolog 1.